The following is a 337-amino-acid chain: Monoacylglycerol lipase ABHD6 (337 aa).

Residues 1–19 (MDLDVVNMFVIAGGTLALP) lie on the Extracellular side of the membrane. The helical; Signal-anchor for type II membrane protein transmembrane segment at 20 to 42 (ILAFVASFLLWPSALIRIYYWYW) threads the bilayer. The Cytoplasmic segment spans residues 43 to 337 (RRTLGMQVRY…HSTDNSKKLD (295 aa)). An AB hydrolase-1 domain is found at 72 to 313 (PSILMLHGFS…CGHSVVMERP (242 aa)). The active-site Nucleophile is Ser148. Catalysis depends on charge relay system residues Asp278 and His306.

It belongs to the AB hydrolase superfamily.

It localises to the late endosome membrane. The protein localises to the lysosome membrane. It is found in the mitochondrion membrane. The enzyme catalyses Hydrolyzes glycerol monoesters of long-chain fatty acids.. The catalysed reaction is 1-octanoylglycerol + H2O = octanoate + glycerol + H(+). It catalyses the reaction 1-decanoylglycerol + H2O = decanoate + glycerol + H(+). It carries out the reaction 1-dodecanoylglycerol + H2O = dodecanoate + glycerol + H(+). The enzyme catalyses 1-tetradecanoylglycerol + H2O = tetradecanoate + glycerol + H(+). The catalysed reaction is 2-hexadecanoylglycerol + H2O = glycerol + hexadecanoate + H(+). It catalyses the reaction 2-(9Z-octadecenoyl)-glycerol + H2O = glycerol + (9Z)-octadecenoate + H(+). It carries out the reaction 1-(9Z-octadecenoyl)-glycerol + H2O = glycerol + (9Z)-octadecenoate + H(+). The enzyme catalyses 2-(9Z,12Z-octadecadienoyl)-glycerol + H2O = (9Z,12Z)-octadecadienoate + glycerol + H(+). The catalysed reaction is 2-(5Z,8Z,11Z,14Z-eicosatetraenoyl)-glycerol + H2O = glycerol + (5Z,8Z,11Z,14Z)-eicosatetraenoate + H(+). It catalyses the reaction 1-(5Z,8Z,11Z,14Z-eicosatetraenoyl)-glycerol + H2O = glycerol + (5Z,8Z,11Z,14Z)-eicosatetraenoate + H(+). It carries out the reaction 1-(9Z,12Z-octadecadienoyl)-glycerol + H2O = (9Z,12Z)-octadecadienoate + glycerol + H(+). The enzyme catalyses 3-(9Z-octadecenoyl)-sn-glycero-1-phospho-(3'-(9Z-octadecenoyl)-1'-sn-glycerol) + H2O = 3-(9Z-octadecenoyl)-sn-glycero-1-phospho-(1'-sn-glycerol) + (9Z)-octadecenoate + H(+). The catalysed reaction is (S,S)-2-(9Z-octadecenoyl)-sn-glycero-1-phospho-(2'-(9Z-octadecenoyl)-1'-sn-glycerol) + H2O = (S,S)-2-(9Z-octadecenoyl)-sn-glycero-1-phospho-(1'-sn-glycerol) + (9Z)-octadecenoate + H(+). It catalyses the reaction (R,R)-2-(9Z-octadecenoyl)-sn-glycero-3-phospho-(2'-(9Z-octadecenoyl)-3'-sn-glycerol) + H2O = (R,R)-2-(9Z-octadecenoyl)-sn-glycero-3-phospho-(3'-sn-glycerol) + (9Z)-octadecenoate + H(+). Functionally, lipase that preferentially hydrolysis medium-chain saturated monoacylglycerols including 2-arachidonoylglycerol. Through 2-arachidonoylglycerol degradation may regulate endocannabinoid signaling pathways. Also has a lysophosphatidyl lipase activity with a preference for lysophosphatidylglycerol among other lysophospholipids. Also able to degrade bis(monoacylglycero)phosphate (BMP) and constitutes the major enzyme for BMP catabolism. BMP, also known as lysobisphosphatidic acid, is enriched in late endosomes and lysosomes and plays a key role in the formation of intraluminal vesicles and in lipid sorting. This is Monoacylglycerol lipase ABHD6 from Bos taurus (Bovine).